We begin with the raw amino-acid sequence, 169 residues long: S-ribosylhomocysteine lyase (169 aa).

3 residues coordinate Fe cation: His54, His58, and Cys128.

This sequence belongs to the LuxS family. In terms of assembly, homodimer. Requires Fe cation as cofactor.

It catalyses the reaction S-(5-deoxy-D-ribos-5-yl)-L-homocysteine = (S)-4,5-dihydroxypentane-2,3-dione + L-homocysteine. Functionally, involved in the synthesis of autoinducer 2 (AI-2) which is secreted by bacteria and is used to communicate both the cell density and the metabolic potential of the environment. The regulation of gene expression in response to changes in cell density is called quorum sensing. Catalyzes the transformation of S-ribosylhomocysteine (RHC) to homocysteine (HC) and 4,5-dihydroxy-2,3-pentadione (DPD). The sequence is that of S-ribosylhomocysteine lyase from Tolumonas auensis (strain DSM 9187 / NBRC 110442 / TA 4).